Here is a 477-residue protein sequence, read N- to C-terminus: Ankyrin repeat, SAM and basic leucine zipper domain-containing protein 1 (477 aa).

Residues 1-24 (MAASSLWGPAVAGGGESSESEDDG) are disordered. A phosphoserine mark is found at serine 17, serine 18, and serine 20. ANK repeat units lie at residues 45–74 (EKNEMFKKALTTGDTSLVEELLNAGISVDS), 78–107 (YGWTPLMFAASIANVNLVRVLLNRGANASF), 110–144 (DKQTVLMTACSARGSQEQIIKCVELLLSRNADPNV), 148–177 (RQMTPIMYAARGGHPQVVALLVAHGAEVNA), 181–210 (NGYTALTWAAYQGHKNVILKLLELGANKML), and 214–243 (DGKTPSEIANRNKHPEIFSLLSLTLNPLEG). Residues 272–334 (SYTAFGELDL…KILSALKELM (63 aa)) enclose the SAM domain.

Interacts with DDX4, PIWIL1, RANBP9 and TDRD1.

The protein resides in the cytoplasm. In terms of biological role, plays a central role during spermatogenesis by repressing transposable elements and preventing their mobilization, which is essential for the germline integrity. Acts via the piRNA metabolic process, which mediates the repression of transposable elements during meiosis by forming complexes composed of piRNAs and Piwi proteins and governs the methylation and subsequent repression of transposons. Its association with pi-bodies suggests a participation in the primary piRNAs metabolic process. Required prior to the pachytene stage to facilitate the production of multiple types of piRNAs, including those associated with repeats involved in the regulation of retrotransposons. May act by mediating protein-protein interactions during germ cell maturation. The sequence is that of Ankyrin repeat, SAM and basic leucine zipper domain-containing protein 1 (ASZ1) from Echinops telfairi (Lesser hedgehog tenrec).